Consider the following 108-residue polypeptide: Holo-[acyl-carrier-protein] synthase (108 aa).

Positions 9 and 52 each coordinate Mg(2+).

The protein belongs to the P-Pant transferase superfamily. AcpS family. Requires Mg(2+) as cofactor.

It localises to the cytoplasm. The enzyme catalyses apo-[ACP] + CoA = holo-[ACP] + adenosine 3',5'-bisphosphate + H(+). Transfers the 4'-phosphopantetheine moiety from coenzyme A to a Ser of acyl-carrier-protein. This Coprothermobacter proteolyticus (strain ATCC 35245 / DSM 5265 / OCM 4 / BT) protein is Holo-[acyl-carrier-protein] synthase.